A 478-amino-acid polypeptide reads, in one-letter code: Ribosomal RNA small subunit methyltransferase F (478 aa).

S-adenosyl-L-methionine is bound by residues 125–131 (AAAPGSK), E149, D176, and D194. The active-site Nucleophile is the C247.

This sequence belongs to the class I-like SAM-binding methyltransferase superfamily. RsmB/NOP family.

The protein resides in the cytoplasm. It carries out the reaction cytidine(1407) in 16S rRNA + S-adenosyl-L-methionine = 5-methylcytidine(1407) in 16S rRNA + S-adenosyl-L-homocysteine + H(+). Functionally, specifically methylates the cytosine at position 1407 (m5C1407) of 16S rRNA. The polypeptide is Ribosomal RNA small subunit methyltransferase F (Serratia proteamaculans (strain 568)).